We begin with the raw amino-acid sequence, 141 residues long: Perlwapin-like protein (141 aa).

The first 19 residues, M1 to C19, serve as a signal peptide directing secretion. The WAP domain occupies K23 to V71. 6 disulfides stabilise this stretch: C30-C60, C39-C64, C47-C59, C53-C68, C81-C105, and C92-C104.

As to expression, component of the organic matrix of calcified shell layers like nacre and prisms.

It is found in the secreted. This is Perlwapin-like protein from Mytilus galloprovincialis (Mediterranean mussel).